Here is a 265-residue protein sequence, read N- to C-terminus: ETS-related transcription factor Elf-5 (265 aa).

Residues 43 to 129 form the PNT domain; that stretch reads YPAFEHQTAC…FILQNIRTQG (87 aa). A DNA-binding region (ETS) is located at residues 173-254; sequence SHLWEFVRDL…VDRRLVYKFG (82 aa).

Belongs to the ETS family. In terms of tissue distribution, expressed exclusively in tissues with a high content of epithelial cells. Highly expressed in salivary gland, mammary gland, kidney and prostate. Weakly expressed in placenta and lung. Isoform 1 and isoform 2 are differentially expressed in different tissues. In the kidney, only isoform 1 was expressed, while prostate expressed both isoforms, with levels of isoform 2 being higher. Expression is up-regulated during keratinocyte differentiation. Several epithelial carcinoma cell lines showed lack of expression.

It is found in the nucleus. Its function is as follows. Transcriptionally activator that may play a role in regulating the later stages of keratinocytes terminal differentiation. Isoform 2 binds to DNA sequences containing the consensus nucleotide core sequence GGA[AT]. Transcriptionally activates SPRR2A and the parotid gland-specific PSP promoters. The chain is ETS-related transcription factor Elf-5 (ELF5) from Homo sapiens (Human).